The following is a 419-amino-acid chain: Metacaspase-1 (419 aa).

A disordered region spans residues 1–109 (MSGYPGYNNG…PPQGMHAFGQ (109 aa)). Pro residues-rich tracts occupy residues 18 to 37 (QYPP…PPPQ) and 45 to 61 (QPPP…PPPQ). The segment covering 83 to 95 (SVNSNAYTNGNQN) has biased composition (polar residues). Active-site residues include His210 and Cys266.

It belongs to the peptidase C14B family.

Involved in cell death (apoptosis). This is Metacaspase-1 (casA) from Botryotinia fuckeliana (strain B05.10) (Noble rot fungus).